Reading from the N-terminus, the 881-residue chain is DNA replication helicase (881 aa).

A disordered region spans residues 1-32 (MESADILPGSRGTVDRRCEGSEEKITPPRPVE). Residues 13–32 (TVDRRCEGSEEKITPPRPVE) are compositionally biased toward basic and acidic residues. 105-112 (GNAGSGKS) is a binding site for ATP.

Belongs to the herpesviridae helicase family. As to quaternary structure, associates with the primase and the primase-associated factor to form the helicase-primase complex.

It is found in the host nucleus. Functionally, component of the helicase/primase complex. Unwinds the DNA at the replication forks and generates single-stranded DNA for both leading and lagging strand synthesis. The primase synthesizes short RNA primers on the lagging strand that the polymerase elongates using dNTPs. Possesses helicase-like motifs and therefore may act as the helicase subunit of the complex. The polypeptide is DNA replication helicase (Equus caballus (Horse)).